A 97-amino-acid chain; its full sequence is Sec-independent protein translocase protein TatA (97 aa).

A helical membrane pass occupies residues 1–21 (MGFNIWSLLIILLIVALLFGT). The disordered stretch occupies residues 28–97 (GGDLGGAIRG…SAEHHDRSTS (70 aa)). A compositionally biased stretch (basic and acidic residues) spans 37–56 (GFKESMREGEEEEAQKRADG). Low complexity predominate over residues 78-87 (QARESSSARQ). Residues 88–97 (SAEHHDRSTS) are compositionally biased toward basic and acidic residues.

Belongs to the TatA/E family. The Tat system comprises two distinct complexes: a TatABC complex, containing multiple copies of TatA, TatB and TatC subunits, and a separate TatA complex, containing only TatA subunits. Substrates initially bind to the TatABC complex, which probably triggers association of the separate TatA complex to form the active translocon.

It localises to the cell inner membrane. Part of the twin-arginine translocation (Tat) system that transports large folded proteins containing a characteristic twin-arginine motif in their signal peptide across membranes. TatA could form the protein-conducting channel of the Tat system. In Halorhodospira halophila (strain DSM 244 / SL1) (Ectothiorhodospira halophila (strain DSM 244 / SL1)), this protein is Sec-independent protein translocase protein TatA.